We begin with the raw amino-acid sequence, 386 residues long: Succinate--CoA ligase [ADP-forming] subunit beta (386 aa).

The 236-residue stretch at 9-244 folds into the ATP-grasp domain; sequence KELLKQFGVP…LDEEDPAEIE (236 aa). Residues K46, 53-55, E99, A102, and E107 contribute to the ATP site; that span reads GRG. Mg(2+) is bound by residues N199 and D213. Substrate contacts are provided by residues N264 and 321-323; that span reads GIM.

Belongs to the succinate/malate CoA ligase beta subunit family. In terms of assembly, heterotetramer of two alpha and two beta subunits. Mg(2+) is required as a cofactor.

It carries out the reaction succinate + ATP + CoA = succinyl-CoA + ADP + phosphate. The enzyme catalyses GTP + succinate + CoA = succinyl-CoA + GDP + phosphate. It participates in carbohydrate metabolism; tricarboxylic acid cycle; succinate from succinyl-CoA (ligase route): step 1/1. Succinyl-CoA synthetase functions in the citric acid cycle (TCA), coupling the hydrolysis of succinyl-CoA to the synthesis of either ATP or GTP and thus represents the only step of substrate-level phosphorylation in the TCA. The beta subunit provides nucleotide specificity of the enzyme and binds the substrate succinate, while the binding sites for coenzyme A and phosphate are found in the alpha subunit. This is Succinate--CoA ligase [ADP-forming] subunit beta from Bordetella avium (strain 197N).